The chain runs to 202 residues: 3-isopropylmalate dehydratase small subunit (202 aa).

It belongs to the LeuD family. LeuD type 1 subfamily. In terms of assembly, heterodimer of LeuC and LeuD.

It carries out the reaction (2R,3S)-3-isopropylmalate = (2S)-2-isopropylmalate. It participates in amino-acid biosynthesis; L-leucine biosynthesis; L-leucine from 3-methyl-2-oxobutanoate: step 2/4. In terms of biological role, catalyzes the isomerization between 2-isopropylmalate and 3-isopropylmalate, via the formation of 2-isopropylmaleate. This is 3-isopropylmalate dehydratase small subunit from Rhizobium etli (strain ATCC 51251 / DSM 11541 / JCM 21823 / NBRC 15573 / CFN 42).